Consider the following 200-residue polypeptide: Nucleoside triphosphate pyrophosphatase (200 aa).

The active-site Proton acceptor is the Asp79.

The protein belongs to the Maf family. The cofactor is a divalent metal cation.

It is found in the cytoplasm. The enzyme catalyses a ribonucleoside 5'-triphosphate + H2O = a ribonucleoside 5'-phosphate + diphosphate + H(+). The catalysed reaction is a 2'-deoxyribonucleoside 5'-triphosphate + H2O = a 2'-deoxyribonucleoside 5'-phosphate + diphosphate + H(+). Nucleoside triphosphate pyrophosphatase. May have a dual role in cell division arrest and in preventing the incorporation of modified nucleotides into cellular nucleic acids. The polypeptide is Nucleoside triphosphate pyrophosphatase (Legionella pneumophila (strain Paris)).